The sequence spans 209 residues: Small ribosomal subunit protein uS4 (209 aa).

4 residues coordinate Zn(2+): Cys-9, Cys-12, Cys-26, and Cys-31. The C4-type zinc finger occupies Cys-9–Cys-31. Residues Ala-98–Ile-161 form the S4 RNA-binding domain.

It belongs to the universal ribosomal protein uS4 family. Part of the 30S ribosomal subunit. Contacts protein S5. The interaction surface between S4 and S5 is involved in control of translational fidelity. Requires Zn(2+) as cofactor.

One of the primary rRNA binding proteins, it binds directly to 16S rRNA where it nucleates assembly of the body of the 30S subunit. In terms of biological role, with S5 and S12 plays an important role in translational accuracy. The chain is Small ribosomal subunit protein uS4 (rpsD) from Thermotoga maritima (strain ATCC 43589 / DSM 3109 / JCM 10099 / NBRC 100826 / MSB8).